Here is a 686-residue protein sequence, read N- to C-terminus: MIVSMDVIKRVYQYAEPNLSLVGWMGMLGFPAYYFIWEYWFPQSYENLGLRCAAAVLFGGLVFRDSMPKKWQRYMPGYFLFTIGFCLPFFFAFMMLMNDWSTIWAMSFMASIFLHILLVHDTRVMALQALFSVLVAYLAVYGLTDFHPTTLIEWQYIPIFLFTYVFGNLCFFRNQISHETKVSIAKTFGAGIAHEMRNPLSALKTSIDVVRTMIPKPQTAAHTDYSLDAQELDLLHQILNEADDVIYSGNNAIDLLLTSIDENRVSPASFKKHSVVDVIEKAVKTFPYKNAADQHSVELEVHQPFDFFGSDTLLTYALFNLLKNAFYYQKEHFSVCISIEQTSEHNLIRVRDNGVGIAPEMLEDIFRDFYTFGKNGSYGLGLPFCRKVMSAFGGTIRCASQQGQWTEFVLSFPRYDSDTVNEIKTELLKTKSLIYIGSNQAIVRELNQLAVEDEFGFTAISAQQAVRRQDYEFEFDLILLDLDDATAQGELLPKLEGTLSFAEGCIGYVYDPGKTYAVNINRYLRIQPISIHSILRKPRKIIERLLFEQESLSMNRNVIPLQKSRHERRILVVDDNQSIRTFTAILLEQQGYEVVQANDGSEVLKHMESQNIDLVLMDIEMPNVGGLEATRLIRNSEHEYKNIPIIGYTGDNSPKTLALVQTSGMNDFIVKPADRDVLLNKVAAWV.

Transmembrane regions (helical) follow at residues 21–41 (LVGW…EYWF), 47–64 (NLGL…LVFR), 77–97 (GYFL…MMLM), 100–120 (WSTI…LLVH), 124–144 (VMAL…YGLT), and 152–172 (IEWQ…LCFF). The region spanning 191-416 (GIAHEMRNPL…EFVLSFPRYD (226 aa)) is the Histidine kinase domain. H194 carries the post-translational modification Phosphohistidine; by autocatalysis. The region spanning 569 to 686 (RILVVDDNQS…VLLNKVAAWV (118 aa)) is the Response regulatory domain. D618 bears the 4-aspartylphosphate mark.

Its subcellular location is the cell membrane. The catalysed reaction is ATP + protein L-histidine = ADP + protein N-phospho-L-histidine.. Its function is as follows. Senses the quorum-sensing autoinducer CAI-1 ((S)-3-hydroxytridecan-4-one) which probably functions as an intragenus signal. The sensory signal is then relayed to LuxU and LuxO. This chain is CAI-1 autoinducer sensor kinase/phosphatase CqsS (cqsS), found in Vibrio cholerae serotype O1 (strain ATCC 39315 / El Tor Inaba N16961).